The following is a 584-amino-acid chain: Breast carcinoma-amplified sequence 1 (584 aa).

Disordered stretches follow at residues 1–29 (MGNQ…NASA), 59–280 (VATS…AAAI), and 297–377 (PNKA…GKLF). 2 stretches are compositionally biased toward polar residues: residues 59 to 69 (VATSSPETTEI) and 112 to 128 (ADSS…SNKA). Phosphoserine occurs at positions 124 and 192. Basic and acidic residues-rich tracts occupy residues 186-226 (SKPK…KVDE), 238-252 (PAGK…KEGQ), and 300-311 (AETKKDPEDTGA). Ser314 carries the post-translational modification Phosphoserine. The span at 314 to 354 (SPTTSADLKSDKANFTSQETQGAGKNSKGCNPSGHTQSVTT) shows a compositional bias: polar residues. Residues 357-366 (PAKEGTKEKS) are compositionally biased toward basic and acidic residues. Phosphoserine is present on residues Ser381 and Ser399. Positions 415–584 (TVDLNEGDAA…VSIGPVGKSK (170 aa)) are disordered. Residues 428 to 439 (TEAKLKREESKP) are compositionally biased toward basic and acidic residues. Thr480 carries the phosphothreonine modification. The segment covering 494-506 (KGKEGSSKDKKSA) has biased composition (basic and acidic residues). The span at 525-540 (CTEQATVDTNSLQNGD) shows a compositional bias: polar residues. Residues 541–550 (KLQKRPEKRQ) are compositionally biased toward basic and acidic residues. Residue Ser552 is modified to Phosphoserine. Residues 565–584 (MLDAQVQTDPVSIGPVGKSK) form an interacts with DYNLL1 and DYNLL2 region.

In terms of assembly, homodimer. Interacts with DYNLL1 and DYNLL2. Highly expressed in the brain and, more specifically, in oligodendrocytes (at protein level). Expressed in the prostate, and at lower levels in testis, intestine and colon. Overexpressed in most breast cancer cell lines and down-regulated in some colorectal tumors.

It is found in the cytoplasm. Functionally, required for myelination. The chain is Breast carcinoma-amplified sequence 1 (BCAS1) from Homo sapiens (Human).